The sequence spans 448 residues: Exodeoxyribonuclease 7 large subunit (448 aa).

The protein belongs to the XseA family. In terms of assembly, heterooligomer composed of large and small subunits.

It is found in the cytoplasm. The catalysed reaction is Exonucleolytic cleavage in either 5'- to 3'- or 3'- to 5'-direction to yield nucleoside 5'-phosphates.. Its function is as follows. Bidirectionally degrades single-stranded DNA into large acid-insoluble oligonucleotides, which are then degraded further into small acid-soluble oligonucleotides. The chain is Exodeoxyribonuclease 7 large subunit from Alcanivorax borkumensis (strain ATCC 700651 / DSM 11573 / NCIMB 13689 / SK2).